The following is a 357-amino-acid chain: Peptide chain release factor 1 (357 aa).

Gln-233 is modified (N5-methylglutamine). The interval 284-305 (RSASISADRKSQVGTGDRSERI) is disordered.

Belongs to the prokaryotic/mitochondrial release factor family. Post-translationally, methylated by PrmC. Methylation increases the termination efficiency of RF1.

It localises to the cytoplasm. Functionally, peptide chain release factor 1 directs the termination of translation in response to the peptide chain termination codons UAG and UAA. This chain is Peptide chain release factor 1, found in Clostridium novyi (strain NT).